A 493-amino-acid polypeptide reads, in one-letter code: Cobyric acid synthase (493 aa).

The GATase cobBQ-type domain occupies 255–441 (ELEIAVLRLP…LHGLLENGRW (187 aa)). Cysteine 336 (nucleophile) is an active-site residue. Residue histidine 433 is part of the active site.

The protein belongs to the CobB/CobQ family. CobQ subfamily.

It participates in cofactor biosynthesis; adenosylcobalamin biosynthesis. Its function is as follows. Catalyzes amidations at positions B, D, E, and G on adenosylcobyrinic A,C-diamide. NH(2) groups are provided by glutamine, and one molecule of ATP is hydrogenolyzed for each amidation. The polypeptide is Cobyric acid synthase (Synechococcus sp. (strain RCC307)).